Here is a 171-residue protein sequence, read N- to C-terminus: Ribosome maturation factor RimM (171 aa).

The 75-residue stretch at 96–170 (AEGEYYYHEI…LVTIHVTEGL (75 aa)) folds into the PRC barrel domain.

This sequence belongs to the RimM family. As to quaternary structure, binds ribosomal protein uS19.

The protein localises to the cytoplasm. An accessory protein needed during the final step in the assembly of 30S ribosomal subunit, possibly for assembly of the head region. Essential for efficient processing of 16S rRNA. May be needed both before and after RbfA during the maturation of 16S rRNA. It has affinity for free ribosomal 30S subunits but not for 70S ribosomes. The sequence is that of Ribosome maturation factor RimM from Bacillus anthracis (strain A0248).